The sequence spans 277 residues: Outer plastidial membrane protein porin (277 aa).

The protein belongs to the eukaryotic mitochondrial porin (TC 1.B.8.1) family.

It localises to the plastid outer membrane. Functionally, forms a channel through the cell membrane that allows diffusion of small hydrophilic molecules. The channel adopts an open conformation at low or zero membrane potential and a closed conformation at potentials above 30-40 mV. The open state has a weak anion selectivity whereas the closed state is cation-selective. In Zea mays (Maize), this protein is Outer plastidial membrane protein porin (POR1).